The sequence spans 63 residues: Venom peptide 2b (63 aa).

Residues 1–22 form the signal peptide; that stretch reads MRGTSFILFAVVVILGFLHGNA. 5 AXPX repeats span residues 22–25, 26–29, 32–35, 38–41, and 44–47; these read AEPL, ANPE, and ANPD. A propeptide spanning residues 23–48 is cleaved from the precursor; that stretch reads EPLANPEPSANPDPLANPDPLANPEA. Residue Leu-62 is modified to Leucine amide.

The protein belongs to the MCD family. Mastoparan subfamily. As to expression, expressed by the venom gland.

The protein resides in the secreted. The protein localises to the target cell membrane. Functionally, antimicrobial peptide with strong and moderate activity against the fungi B.cinerea (MIC=5 uM) and C.albicans (MIC=100 uM), the Gram-negative bacterium E.coli (MIC=200 uM) and the Gram-positive bacterium S.aureus (MIC=25 uM). Shows cytolytic activity against insect cell lines. Has potent hemolytic activity against human erythrocytes (EC(50)=64 uM). In vivo, peptide injection in the vicinity of the head and thorax of lepidopteran larvae induces feeding disorder followed by death due to starvation. The polypeptide is Venom peptide 2b (Eumenes pomiformis (Potter wasp)).